The sequence spans 206 residues: N-(5'-phosphoribosyl)anthranilate isomerase (206 aa).

Belongs to the TrpF family.

It carries out the reaction N-(5-phospho-beta-D-ribosyl)anthranilate = 1-(2-carboxyphenylamino)-1-deoxy-D-ribulose 5-phosphate. It functions in the pathway amino-acid biosynthesis; L-tryptophan biosynthesis; L-tryptophan from chorismate: step 3/5. This Azotobacter vinelandii (strain DJ / ATCC BAA-1303) protein is N-(5'-phosphoribosyl)anthranilate isomerase.